The primary structure comprises 602 residues: Exopolysaccharide phosphotransferase SCO2594 (602 aa).

Positions 251 to 271 (PRAGEDLDAGDGAAGGPRPGL) are disordered.

It belongs to the stealth family.

This is Exopolysaccharide phosphotransferase SCO2594 from Streptomyces coelicolor (strain ATCC BAA-471 / A3(2) / M145).